The sequence spans 570 residues: Periplasmic trehalase (570 aa).

Residues 1-34 (MIPPEIRRSVLLQKAIKLALAGTLLTFASFSATA) form the signal peptide. Residues arginine 159, 166 to 167 (WD), asparagine 203, 212 to 214 (RSQ), 284 to 286 (RPE), and glycine 317 each bind substrate. Catalysis depends on proton donor/acceptor residues aspartate 319 and glutamate 503. Substrate is bound at residue glutamate 518. Positions 544 to 570 (KPCDSVPSTRPASLSATPTKTPSAATQ) are disordered. The segment covering 554-570 (PASLSATPTKTPSAATQ) has biased composition (low complexity).

It belongs to the glycosyl hydrolase 37 family. As to quaternary structure, monomer.

The protein localises to the periplasm. It carries out the reaction alpha,alpha-trehalose + H2O = alpha-D-glucose + beta-D-glucose. In terms of biological role, provides the cells with the ability to utilize trehalose at high osmolarity by splitting it into glucose molecules that can subsequently be taken up by the phosphotransferase-mediated uptake system. The sequence is that of Periplasmic trehalase from Salmonella paratyphi B (strain ATCC BAA-1250 / SPB7).